Consider the following 699-residue polypeptide: Elongation factor G 2 (699 aa).

The tr-type G domain occupies 8–290; that stretch reads ERYRNIGICA…AVIEYLPSPT (283 aa). GTP contacts are provided by residues 17–24, 88–92, and 142–145; these read AHVDAGKT, DTPGH, and NKMD.

It belongs to the TRAFAC class translation factor GTPase superfamily. Classic translation factor GTPase family. EF-G/EF-2 subfamily.

The protein localises to the cytoplasm. Functionally, catalyzes the GTP-dependent ribosomal translocation step during translation elongation. During this step, the ribosome changes from the pre-translocational (PRE) to the post-translocational (POST) state as the newly formed A-site-bound peptidyl-tRNA and P-site-bound deacylated tRNA move to the P and E sites, respectively. Catalyzes the coordinated movement of the two tRNA molecules, the mRNA and conformational changes in the ribosome. The chain is Elongation factor G 2 from Colwellia psychrerythraea (strain 34H / ATCC BAA-681) (Vibrio psychroerythus).